We begin with the raw amino-acid sequence, 456 residues long: Adenylosuccinate lyase (456 aa).

Residues 15–16, 90–92, and 122–123 contribute to the N(6)-(1,2-dicarboxyethyl)-AMP site; these read RY, NHD, and TS. His-171 acts as the Proton donor/acceptor in catalysis. Position 248 (Gln-248) interacts with N(6)-(1,2-dicarboxyethyl)-AMP. Residue Ser-296 is the Proton donor/acceptor of the active site. N(6)-(1,2-dicarboxyethyl)-AMP contacts are provided by residues Ser-297, 302–304, Asn-310, Arg-336, and 341–345; these read KVN and STVLR.

This sequence belongs to the lyase 1 family. Adenylosuccinate lyase subfamily. Homotetramer. Residues from neighboring subunits contribute catalytic and substrate-binding residues to each active site.

The enzyme catalyses N(6)-(1,2-dicarboxyethyl)-AMP = fumarate + AMP. It catalyses the reaction (2S)-2-[5-amino-1-(5-phospho-beta-D-ribosyl)imidazole-4-carboxamido]succinate = 5-amino-1-(5-phospho-beta-D-ribosyl)imidazole-4-carboxamide + fumarate. It functions in the pathway purine metabolism; AMP biosynthesis via de novo pathway; AMP from IMP: step 2/2. The protein operates within purine metabolism; IMP biosynthesis via de novo pathway; 5-amino-1-(5-phospho-D-ribosyl)imidazole-4-carboxamide from 5-amino-1-(5-phospho-D-ribosyl)imidazole-4-carboxylate: step 2/2. In terms of biological role, catalyzes two reactions in de novo purine nucleotide biosynthesis. Catalyzes the breakdown of 5-aminoimidazole- (N-succinylocarboxamide) ribotide (SAICAR or 2-[5-amino-1-(5-phospho-beta-D-ribosyl)imidazole-4-carboxamido]succinate) to 5-aminoimidazole-4-carboxamide ribotide (AICAR or 5-amino-1-(5-phospho-beta-D-ribosyl)imidazole-4-carboxamide) and fumarate, and of adenylosuccinate (ADS or N(6)-(1,2-dicarboxyethyl)-AMP) to adenosine monophosphate (AMP) and fumarate. The sequence is that of Adenylosuccinate lyase (purB) from Pseudomonas aeruginosa (strain ATCC 15692 / DSM 22644 / CIP 104116 / JCM 14847 / LMG 12228 / 1C / PRS 101 / PAO1).